A 309-amino-acid chain; its full sequence is HPr kinase/phosphorylase (309 aa).

Catalysis depends on residues His138 and Lys159. 153 to 160 (GDSGIGKS) is a binding site for ATP. Residue Ser160 participates in Mg(2+) binding. Asp177 acts as the Proton acceptor; for phosphorylation activity. Proton donor; for dephosphorylation activity in catalysis. The interval 201-210 (LEIRGVGIID) is important for the catalytic mechanism of both phosphorylation and dephosphorylation. Glu202 serves as a coordination point for Mg(2+). Arg243 is an active-site residue. Residues 264–269 (PVKTGR) are important for the catalytic mechanism of dephosphorylation.

Belongs to the HPrK/P family. Homohexamer. Mg(2+) serves as cofactor.

The enzyme catalyses [HPr protein]-L-serine + ATP = [HPr protein]-O-phospho-L-serine + ADP + H(+). It catalyses the reaction [HPr protein]-O-phospho-L-serine + phosphate + H(+) = [HPr protein]-L-serine + diphosphate. Kinase activity is slightly activated by fructose 1,6-bisphosphate (FBP) at low ATP concentrations, and is inhibited by inorganic phosphate (Pi). Moreover, FBP, phosphoenolpyruvate and 2-phosphoglycerate, but not fructose 1-P, fructose 6-P, and ribulose 1,5-bisphosphate protect kinase activity against inhibition by Pi. Dephosphorylation of P-Ser-HPr by S.salivarius HPrK/P is strictly dependent on the presence of Pi, and is inhibited by FBP. FBP seems to modulate HPrK/P activities by enhancing affinity of the active site for ATP and, conversely, lowering the affinity for Pi. Its function is as follows. Catalyzes the ATP- as well as probably the pyrophosphate-dependent phosphorylation of 'Ser-46' in HPr, a phosphocarrier protein of the phosphoenolpyruvate-dependent sugar phosphotransferase system (PTS). HprK/P also catalyzes the pyrophosphate-producing, inorganic phosphate-dependent dephosphorylation (phosphorolysis) of seryl-phosphorylated HPr (P-Ser-HPr). The two antagonistic activities of HprK/P are regulated by several intracellular metabolites, which change their concentration in response to the absence or presence of rapidly metabolisable carbon sources (glucose, fructose, etc.) in the growth medium. Therefore, by controlling the phosphorylation state of HPr, the bifunctional HPr kinase/phosphorylase is a sensor enzyme that plays a major role in the regulation of carbon metabolism and sugar transport: it probably mediates carbon catabolite repression (CCR), and regulates PTS-catalyzed carbohydrate uptake and inducer exclusion. In Streptococcus salivarius, this protein is HPr kinase/phosphorylase (hprK).